The primary structure comprises 747 residues: MPLFKLTGQGKQIDDAMRSFAEKVFASEVKDEGGRHEISPFDVDEICPISLREMQAHIFHMENLSMSMDGRRKRRFQGRKTVNLSIPQSETSSTKLSHIEEFISSSPTYESVPDFQRVQITGDYASGVTVEDFEVVCKGLYRALCIREKYMQKSFQRFPKTPSKYLRNIDGEALVAIESFYPVFTPPPKKGEDPFRREDLPANLGYHLKMKGGVIYIYPDEAAASRDEPKPYPYPNLDDFLDDMNFLLALIAQGPVKTYTHRRLKFLSSKFQVHQMLNEMDELKELKNNPHRDFYNCRKVDTHIHAAACMNQKHLLRFIKKSYHIDADRVVYSTKEKNLTLKELFAQLNMHPYDLTVDSLDVHAGRQTFQRFDKFNDKYNPVGASELRDLYLKTDNYINGEYFATIIKEVGADLVDAKYQHAEPRLSIYGRSPDEWSKLSSWFVGNRIYCPNMTWMIQVPRIYDVFRSKNFLPHFGKMLENIFLPVFEATINPQTHPDLSVFLKHITGFDSVDDESKHSGHMFSSKSPKPEEWTMENNPSYTYYAYYMYANIMVLNCLRKERGMNTFLFRPHCGEAGALTHLMTAFMIADNISHGLNLKKSPVLQYLFFLAQIPIAMSPLSNNSLFLEYAKNPFLDFLQKGLMISLSTDDPMQFHFTKEPLMEEYAIAAQVFKLSTCDMCEVARNSVLQCGISHEEKAKFLGNNYLEEGPVGNDIRRTNVAQIRMAYRYETWCYELNLIAEGLKSTE.

Thr81 is modified (phosphothreonine). At Ser85 the chain carries Phosphoserine. Tyr216 is modified (phosphotyrosine). Zn(2+) contacts are provided by His303 and His305. Substrate contacts are provided by residues His305 and 374-379 (KFNDKY). At Ser441 the chain carries Phosphoserine. Position 572 (His572) interacts with Zn(2+). Glu575 is a substrate binding site. Residue His594 is the Proton acceptor of the active site. Zn(2+) is bound at residue Asp649. Residue 650–653 (DPMQ) coordinates substrate.

This sequence belongs to the metallo-dependent hydrolases superfamily. Adenosine and AMP deaminases family. As to quaternary structure, homotetramer. Zn(2+) serves as cofactor.

The enzyme catalyses AMP + H2O + H(+) = IMP + NH4(+). It functions in the pathway purine metabolism; IMP biosynthesis via salvage pathway; IMP from AMP: step 1/1. In terms of biological role, AMP deaminase plays a critical role in energy metabolism. The chain is AMP deaminase 1 from Rattus norvegicus (Rat).